The primary structure comprises 103 residues: Large ribosomal subunit protein bL21 (103 aa).

The protein belongs to the bacterial ribosomal protein bL21 family. As to quaternary structure, part of the 50S ribosomal subunit. Contacts protein L20.

This protein binds to 23S rRNA in the presence of protein L20. This chain is Large ribosomal subunit protein bL21, found in Desulfotalea psychrophila (strain LSv54 / DSM 12343).